We begin with the raw amino-acid sequence, 500 residues long: Probable cytosol aminopeptidase (500 aa).

The Mn(2+) site is built by lysine 264 and aspartate 269. Lysine 276 is an active-site residue. 3 residues coordinate Mn(2+): aspartate 287, aspartate 346, and glutamate 348. Residue arginine 350 is part of the active site.

It belongs to the peptidase M17 family. Mn(2+) serves as cofactor.

It localises to the cytoplasm. It catalyses the reaction Release of an N-terminal amino acid, Xaa-|-Yaa-, in which Xaa is preferably Leu, but may be other amino acids including Pro although not Arg or Lys, and Yaa may be Pro. Amino acid amides and methyl esters are also readily hydrolyzed, but rates on arylamides are exceedingly low.. It carries out the reaction Release of an N-terminal amino acid, preferentially leucine, but not glutamic or aspartic acids.. Presumably involved in the processing and regular turnover of intracellular proteins. Catalyzes the removal of unsubstituted N-terminal amino acids from various peptides. This Chlamydia felis (strain Fe/C-56) (Chlamydophila felis) protein is Probable cytosol aminopeptidase.